The primary structure comprises 86 residues: Evasin-3 (86 aa).

An N-terminal signal peptide occupies residues 1 to 20 (MRALLARLLLCVLVVSDSKG). Intrachain disulfides connect C42–C57, C46–C59, and C53–C70. An N-linked (GlcNAc...) asparagine glycan is attached at N45. The N-linked (GlcNAc...) asparagine glycan is linked to N76.

As to quaternary structure, monomer.

The protein localises to the secreted. Functionally, salivary chemokine-binding protein which shows chemokine neutralizing activity and binds to host chemokines CXCL1, CXCL2, CXCL3, CXCL5, CXCL6 and CXCL8. Binds to CXCL8 with 1:1 stoichiometry. Disrupts CXCL8 homodimer formation, disrupts the glycosaminoglycan-binding site of CXCL8 and inhibits the interaction of CXCL8 with CXCR2. This is Evasin-3 from Rhipicephalus sanguineus (Brown dog tick).